Here is a 130-residue protein sequence, read N- to C-terminus: ATP synthase epsilon chain (130 aa).

This sequence belongs to the ATPase epsilon chain family. As to quaternary structure, F-type ATPases have 2 components, CF(1) - the catalytic core - and CF(0) - the membrane proton channel. CF(1) has five subunits: alpha(3), beta(3), gamma(1), delta(1), epsilon(1). CF(0) has three main subunits: a, b and c.

The protein localises to the cell inner membrane. In terms of biological role, produces ATP from ADP in the presence of a proton gradient across the membrane. The protein is ATP synthase epsilon chain of Sulfurimonas denitrificans (strain ATCC 33889 / DSM 1251) (Thiomicrospira denitrificans (strain ATCC 33889 / DSM 1251)).